Consider the following 198-residue polypeptide: NAD(P)H dehydrogenase (quinone) (198 aa).

Positions 4-189 (VLVLYYSMYG…SIARYQGEYV (186 aa)) constitute a Flavodoxin-like domain. FMN-binding positions include 10–15 (SMYGHI) and 78–80 (TRF). An NAD(+)-binding site is contributed by Tyr-12. Trp-98 contacts substrate. FMN is bound by residues 113-118 (STGTGG) and His-133.

This sequence belongs to the WrbA family. FMN is required as a cofactor.

It carries out the reaction a quinone + NADH + H(+) = a quinol + NAD(+). The enzyme catalyses a quinone + NADPH + H(+) = a quinol + NADP(+). This Escherichia coli (strain SE11) protein is NAD(P)H dehydrogenase (quinone).